We begin with the raw amino-acid sequence, 313 residues long: uncharacterized protein (313 aa).

The protein to B.subtilis YqxC and T.hyodysenteriae hemolysin TlyA.

This is an uncharacterized protein from Bacillus subtilis (strain 168).